The primary structure comprises 742 residues: 5-methyltetrahydropteroyltriglutamate--homocysteine methyltransferase (742 aa).

Residues 18–21 (REWK) and lysine 112 contribute to the 5-methyltetrahydropteroyltri-L-glutamate site. L-homocysteine contacts are provided by residues 420 to 422 (IGS) and glutamate 473. L-methionine-binding positions include 420-422 (IGS) and glutamate 473. Tryptophan 550 is a binding site for 5-methyltetrahydropteroyltri-L-glutamate. Position 588 (aspartate 588) interacts with L-homocysteine. Aspartate 588 contacts L-methionine. Position 594 (glutamate 594) interacts with 5-methyltetrahydropteroyltri-L-glutamate. Histidine 630, cysteine 632, and glutamate 654 together coordinate Zn(2+). Residue histidine 683 is the Proton donor of the active site. Cysteine 715 provides a ligand contact to Zn(2+).

It belongs to the vitamin-B12 independent methionine synthase family. Zn(2+) is required as a cofactor.

The catalysed reaction is 5-methyltetrahydropteroyltri-L-glutamate + L-homocysteine = tetrahydropteroyltri-L-glutamate + L-methionine. Its pathway is amino-acid biosynthesis; L-methionine biosynthesis via de novo pathway; L-methionine from L-homocysteine (MetE route): step 1/1. In terms of biological role, catalyzes the transfer of a methyl group from 5-methyltetrahydrofolate to homocysteine resulting in methionine formation. This Staphylococcus aureus (strain MRSA252) protein is 5-methyltetrahydropteroyltriglutamate--homocysteine methyltransferase.